Consider the following 136-residue polypeptide: Holo-[acyl-carrier-protein] synthase (136 aa).

The Mg(2+) site is built by aspartate 8 and glutamate 58.

This sequence belongs to the P-Pant transferase superfamily. AcpS family. It depends on Mg(2+) as a cofactor.

The protein resides in the cytoplasm. It catalyses the reaction apo-[ACP] + CoA = holo-[ACP] + adenosine 3',5'-bisphosphate + H(+). Its function is as follows. Transfers the 4'-phosphopantetheine moiety from coenzyme A to a Ser of acyl-carrier-protein. The sequence is that of Holo-[acyl-carrier-protein] synthase from Leuconostoc mesenteroides subsp. mesenteroides (strain ATCC 8293 / DSM 20343 / BCRC 11652 / CCM 1803 / JCM 6124 / NCDO 523 / NBRC 100496 / NCIMB 8023 / NCTC 12954 / NRRL B-1118 / 37Y).